The following is a 712-amino-acid chain: Satratoxin biosynthesis SC3 cluster transcription factor SAT20 (712 aa).

Polar residues-rich tracts occupy residues 1 to 10, 25 to 36, 131 to 145, and 269 to 282; these read MPNLPGSSDS, CSSTKPNAAQEN, SEPS…WPSL, and SLPS…SSTG. Disordered stretches follow at residues 1 to 43, 115 to 145, and 264 to 294; these read MPNL…ELAQ, SQNA…WPSL, and PVSG…KADR. A DNA-binding region (zn(2)-C6 fungal-type) is located at residues 306-339; the sequence is CFRCRMYKENCDPGLPCKNCMRVQVTRRTFFGPC. A coiled-coil region spans residues 530–560; sequence QIQIMVAQVMLDKQKNALKRLQERALSKNRH.

Its subcellular location is the nucleus. Functionally, transcriptional regulator that may regulate the expression of the satratoxin biosynthesis SC3 cluster, one of the 3 clusters involved in the biosynthesis of satratoxins, trichothecene mycotoxins that are associated with human food poisonings. In Stachybotrys chartarum (strain CBS 109288 / IBT 7711) (Toxic black mold), this protein is Satratoxin biosynthesis SC3 cluster transcription factor SAT20.